Reading from the N-terminus, the 276-residue chain is Large ribosomal subunit protein uL2 (276 aa).

Disordered stretches follow at residues 33-55 and 221-276; these read LVEA…RHIG and RGTA…AKKK.

It belongs to the universal ribosomal protein uL2 family. As to quaternary structure, part of the 50S ribosomal subunit. Forms a bridge to the 30S subunit in the 70S ribosome.

Functionally, one of the primary rRNA binding proteins. Required for association of the 30S and 50S subunits to form the 70S ribosome, for tRNA binding and peptide bond formation. It has been suggested to have peptidyltransferase activity; this is somewhat controversial. Makes several contacts with the 16S rRNA in the 70S ribosome. This Psychrobacter sp. (strain PRwf-1) protein is Large ribosomal subunit protein uL2.